The sequence spans 937 residues: Scaffold attachment factor B1 (937 aa).

Residues methionine 1–arginine 35 are disordered. Alanine 2 is subject to N-acetylalanine. Positions alanine 11–serine 24 are enriched in low complexity. A phosphoserine mark is found at serine 24 and serine 55. Positions leucine 31–isoleucine 65 constitute an SAP domain. Positions alanine 64 to glutamate 117 are disordered. Acidic residues predominate over residues aspartate 67–valine 77. A Phosphoserine modification is found at serine 79. Over residues glutamate 98–glutamate 117 the composition is skewed to acidic residues. Residues lysine 172 and lysine 186 each participate in a glycyl lysine isopeptide (Lys-Gly) (interchain with G-Cter in SUMO2) cross-link. Residue threonine 188 is modified to Phosphothreonine. Serine 195, serine 197, and serine 209 each carry phosphoserine. The segment at glycine 222–asparagine 429 is disordered. Over residues cysteine 225–glycine 234 the composition is skewed to basic and acidic residues. Residue lysine 231 forms a Glycyl lysine isopeptide (Lys-Gly) (interchain with G-Cter in SUMO) linkage. A compositionally biased stretch (acidic residues) spans glutamate 268–aspartate 287. Lysine 316 is covalently cross-linked (Glycyl lysine isopeptide (Lys-Gly) (interchain with G-Cter in SUMO)). Positions glutamate 341–glutamate 356 are enriched in polar residues. The segment covering glutamine 370–alanine 380 has biased composition (basic and acidic residues). Lysine 403 is covalently cross-linked (Glycyl lysine isopeptide (Lys-Gly) (interchain with G-Cter in SUMO2)). Phosphoserine occurs at positions 405 and 406. A compositionally biased stretch (basic and acidic residues) spans aspartate 412 to arginine 423. Lysine 414 is covalently cross-linked (Glycyl lysine isopeptide (Lys-Gly) (interchain with G-Cter in SUMO2)). The RRM domain occupies arginine 428–serine 506. At serine 437 the chain carries Phosphoserine. 2 stretches are compositionally biased toward basic and acidic residues: residues isoleucine 499–arginine 573 and glycine 581–lysine 592. Disordered stretches follow at residues isoleucine 499 to glutamate 661, arginine 684 to aspartate 738, and phenylalanine 771 to tyrosine 937. Glycyl lysine isopeptide (Lys-Gly) (interchain with G-Cter in SUMO2) cross-links involve residues lysine 505, lysine 536, lysine 565, and lysine 592. The interaction with POLR2A; SFRS1; SFRS9 and SFRS10 stretch occupies residues threonine 550–arginine 814. A Glycyl lysine isopeptide (Lys-Gly) (interchain with G-Cter in SUMO1); alternate cross-link involves residue lysine 600. A Glycyl lysine isopeptide (Lys-Gly) (interchain with G-Cter in SUMO2); alternate cross-link involves residue lysine 600. Phosphoserine occurs at positions 602, 604, 623, and 626. Residues glycine 603 to glutamate 661 are compositionally biased toward basic and acidic residues. The Nuclear localization signal motif lies at lysine 621 to aspartate 638. Positions lysine 621–tyrosine 937 are interaction with SAFB2. Lysine 629 is modified (N6-acetyllysine). Residues glutamine 652 to glutamate 726 adopt a coiled-coil conformation. Basic and acidic residues predominate over residues phenylalanine 771–aspartate 818. An Omega-N-methylarginine modification is found at arginine 832. 2 stretches are compositionally biased toward basic and acidic residues: residues proline 838–alanine 854 and methionine 863–glycine 873. Lysine 869 participates in a covalent cross-link: Glycyl lysine isopeptide (Lys-Gly) (interchain with G-Cter in SUMO2). 4 positions are modified to asymmetric dimethylarginine: arginine 890, arginine 896, arginine 906, and arginine 912. A compositionally biased stretch (basic and acidic residues) spans arginine 927–tyrosine 937.

In terms of assembly, monomer and homodimer. Forms heterodimers with SAFB2. Interacts with KHDRBS3. Interacts with CLK2. Interacts with POLR2A, ASF/SRSF1, SRp30c/SRFS9 and TRA2B/SFRS10. Interacts with SRPK1 and inhibits its activity. Interacts with RBMX. Interacts with FUS. Interacts with ZBED4. In terms of processing, sumoylated by PIAS1 with SUMO1 and SUMO2/3, desumoylated by SENP1. Sumoylation is required for transcriptional repressor activity.

The protein localises to the nucleus. Functionally, binds to scaffold/matrix attachment region (S/MAR) DNA and forms a molecular assembly point to allow the formation of a 'transcriptosomal' complex (consisting of SR proteins and RNA polymerase II) coupling transcription and RNA processing. Functions as an estrogen receptor corepressor and can also bind to the HSP27 promoter and decrease its transcription. Thereby acts as a negative regulator of cell proliferation. When associated with RBMX, binds to and stimulates transcription from the SREBF1 promoter. The chain is Scaffold attachment factor B1 (Safb) from Mus musculus (Mouse).